Reading from the N-terminus, the 725-residue chain is Catalase B (725 aa).

The first 15 residues, 1–15 (MRALSLASLIGIASA), serve as a signal peptide directing secretion. Positions 16-27 (ACPYMTGELERR) are excised as a propeptide. Residue N50 is glycosylated (N-linked (GlcNAc...) asparagine). The active site involves H101. N-linked (GlcNAc...) asparagine glycosylation is present at N119. N174 is an active-site residue. Heme is bound at residue Y388. 3 N-linked (GlcNAc...) asparagine glycosylation sites follow: N447, N550, and N645.

The protein belongs to the catalase family. Homotetramer. Heme serves as cofactor.

It is found in the secreted. The catalysed reaction is 2 H2O2 = O2 + 2 H2O. In terms of biological role, occurs in almost all aerobically respiring organisms and serves to protect cells from the toxic effects of hydrogen peroxide through its degradation into water and oxygen. In Aspergillus oryzae (strain ATCC 42149 / RIB 40) (Yellow koji mold), this protein is Catalase B (catB).